A 436-amino-acid polypeptide reads, in one-letter code: 3-ketoacyl-CoA thiolase (436 aa).

Cysteine 99 (acyl-thioester intermediate) is an active-site residue. Active-site proton acceptor residues include histidine 392 and cysteine 422.

The protein belongs to the thiolase-like superfamily. Thiolase family. As to quaternary structure, heterotetramer of two alpha chains (FadJ) and two beta chains (FadI).

The protein resides in the cytoplasm. The catalysed reaction is an acyl-CoA + acetyl-CoA = a 3-oxoacyl-CoA + CoA. Its pathway is lipid metabolism; fatty acid beta-oxidation. Functionally, catalyzes the final step of fatty acid oxidation in which acetyl-CoA is released and the CoA ester of a fatty acid two carbons shorter is formed. This chain is 3-ketoacyl-CoA thiolase, found in Shigella boydii serotype 18 (strain CDC 3083-94 / BS512).